Here is a 1441-residue protein sequence, read N- to C-terminus: Tripeptidyl-peptidase 2 (1441 aa).

A disordered region spans residues 62-89 (AESSERSNSSKKTTNKEQSDKSAESRMA). Positions 75 to 85 (TNKEQSDKSAE) are enriched in basic and acidic residues. The 502-residue stretch at 107-608 (ETGVLNFLQK…HGLLNVEKAF (502 aa)) folds into the Peptidase S8 domain. Catalysis depends on charge relay system residues D131, H359, and S549. Residues 1139–1155 (TANGAKPKAPATPQAAT) are compositionally biased toward low complexity. 2 disordered regions span residues 1139-1190 (TANG…KANA) and 1255-1274 (QKTS…EDQK). S1182 bears the Phosphoserine mark. A compositionally biased stretch (basic and acidic residues) spans 1265-1274 (SADKQKEDQK).

Belongs to the peptidase S8 family. In terms of assembly, homooligomer; forms a complex of 6 MDa probably composed of 40 subunits. Forms a structure consisting of 2 segmented and twisted strands that form a spindle-shaped structure. Each strand is composed of 10 segments (a segment being a homodimer oriented head to head), stacking of these segments leads to the formation of a twisted single strand. 2 strands compose the fully assembled spindle.

Its subcellular location is the cytoplasm. The enzyme catalyses Release of an N-terminal tripeptide from a polypeptide.. Inhibited by phenylmethanesulfonyl fluoride (PMSF) and butabindide, but not by peptidase inhibitor pepstatin, EDTA, nor bestatin. Functionally, component of the proteolytic cascade acting downstream of the 26S proteasome in the ubiquitin-proteasome pathway. Efficiently cleaves Ala-Ala-Ala-polypeptide and Pro-Pro-Ala-polypeptide, Val-Leu-Lys-polypeptide only at high concentration. Does not cleave Ala-Phe-Pro-polypeptide nor Pro-Leu-Gly-polypeptide. In Drosophila melanogaster (Fruit fly), this protein is Tripeptidyl-peptidase 2 (TppII).